Reading from the N-terminus, the 152-residue chain is Fibroblast growth factor 1 (152 aa).

Ala2 is modified (N-acetylalanine). The propeptide occupies Ala2–Lys15. Position 33 (Asn33) interacts with heparin. Residues Lys127–Lys143 form a heparin-binding region.

This sequence belongs to the heparin-binding growth factors family. As to quaternary structure, monomer. Homodimer. Interacts with FGFR1, FGFR2, FGFR3 and FGFR4. Affinity between fibroblast growth factors (FGFs) and their receptors is increased by heparan sulfate glycosaminoglycans that function as coreceptors. Found in a complex with FGFBP1, FGF1 and FGF2. Interacts with FGFBP1. Part of a Cu(2+)-dependent multiprotein aggregate containing FGF1, S100A13 and SYT1. Interacts with SYT1. Interacts with S100A13. Interacts with LRRC59. Interacts with CSNKA, CSNKB and FIBP. While binding with LRRC59, CSNKA and FIBP seem mutually exclusive, CSNKB and FIBP may cooperatively interact with FGF1. Forms a ternary complex with FGFR1 and ITGAV:ITGB3 and induces the recruitment of PTPN11 to the complex. In terms of processing, in the nucleus, phosphorylated by PKC/PRKCD.

The protein resides in the secreted. The protein localises to the cytoplasm. Its subcellular location is the cell cortex. It localises to the cytosol. It is found in the nucleus. Plays an important role in the regulation of cell survival, cell division, angiogenesis, cell differentiation and cell migration. Functions as a potent mitogen in vitro. Acts as a ligand for FGFR1 and integrins. Binds to FGFR1 in the presence of heparin leading to FGFR1 dimerization and activation via sequential autophosphorylation on tyrosine residues which act as docking sites for interacting proteins, leading to the activation of several signaling cascades. Binds to integrin ITGAV:ITGB3. Its binding to integrin, subsequent ternary complex formation with integrin and FGFR1, and the recruitment of PTPN11 to the complex are essential for FGF1 signaling. Induces the phosphorylation and activation of FGFR1, FRS2, MAPK3/ERK1, MAPK1/ERK2 and AKT1. Can induce angiogenesis. This chain is Fibroblast growth factor 1 (FGF1), found in Sus scrofa (Pig).